Consider the following 183-residue polypeptide: Beta-defensin 129 (183 aa).

The signal sequence occupies residues methionine 1–threonine 19. Cystine bridges form between cysteine 27-cysteine 53, cysteine 34-cysteine 48, and cysteine 38-cysteine 54. A disordered region spans residues alanine 142–glutamine 183. Pro residues predominate over residues serine 159–leucine 170.

The protein belongs to the beta-defensin family.

It is found in the secreted. Its function is as follows. Has antibacterial activity. The sequence is that of Beta-defensin 129 (DEFB129) from Macaca fascicularis (Crab-eating macaque).